A 310-amino-acid polypeptide reads, in one-letter code: Elongation factor Ts, mitochondrial (310 aa).

A mitochondrion-targeting transit peptide spans 1–42 (MGFQVLRSVIQAPLAKRSFLCKSCPSGLRVLYNNILLSSRSY).

The protein belongs to the EF-Ts family.

The protein localises to the mitochondrion. Functionally, associates with the EF-Tu.GDP complex and induces the exchange of GDP to GTP. It remains bound to the aminoacyl-tRNA.EF-Tu.GTP complex up to the GTP hydrolysis stage on the ribosome. The chain is Elongation factor Ts, mitochondrial (tsf1) from Schizosaccharomyces japonicus (strain yFS275 / FY16936) (Fission yeast).